A 217-amino-acid polypeptide reads, in one-letter code: Ribonuclease T (217 aa).

The region spanning 20 to 195 (VVVDVETAGF…YDTEKTAELF (176 aa)) is the Exonuclease domain. Positions 23, 25, 182, and 187 each coordinate Mg(2+). His182 acts as the Proton donor/acceptor in catalysis.

This sequence belongs to the RNase T family. As to quaternary structure, homodimer. Mg(2+) serves as cofactor.

Its function is as follows. Trims short 3' overhangs of a variety of RNA species, leaving a one or two nucleotide 3' overhang. Responsible for the end-turnover of tRNA: specifically removes the terminal AMP residue from uncharged tRNA (tRNA-C-C-A). Also appears to be involved in tRNA biosynthesis. This Vibrio vulnificus (strain CMCP6) protein is Ribonuclease T.